Reading from the N-terminus, the 491-residue chain is Glutamyl-tRNA(Gln) amidotransferase subunit A (491 aa).

Residues Lys78 and Ser158 each act as charge relay system in the active site. The active-site Acyl-ester intermediate is the Ser182.

Belongs to the amidase family. GatA subfamily. Heterotrimer of A, B and C subunits.

It carries out the reaction L-glutamyl-tRNA(Gln) + L-glutamine + ATP + H2O = L-glutaminyl-tRNA(Gln) + L-glutamate + ADP + phosphate + H(+). Functionally, allows the formation of correctly charged Gln-tRNA(Gln) through the transamidation of misacylated Glu-tRNA(Gln) in organisms which lack glutaminyl-tRNA synthetase. The reaction takes place in the presence of glutamine and ATP through an activated gamma-phospho-Glu-tRNA(Gln). This is Glutamyl-tRNA(Gln) amidotransferase subunit A from Bradyrhizobium sp. (strain BTAi1 / ATCC BAA-1182).